A 96-amino-acid chain; its full sequence is Fruit-specific protein (96 aa).

3 disulfide bridges follow: Cys-59–Cys-75, Cys-63–Cys-78, and Cys-69–Cys-92.

As to expression, fruit specific.

The chain is Fruit-specific protein (2A11) from Solanum lycopersicum (Tomato).